A 236-amino-acid chain; its full sequence is Growth-regulating factor 12 (236 aa).

The tract at residues 1–27 (MLAEGRQVYLPPPPPSKLPRLSGTDPT) is disordered. Positions 74 to 109 (ALTFMQRQELEQQVLIYRYFAAGAPVPVHLVLPIWK) constitute a QLQ domain. Positions 140 to 184 (EPEPGRCRRTDGKKWRCSRDVVPGHKYCERHVHRGRGRSRKPMEA) constitute a WRC domain. 2 short sequence motifs (bipartite nuclear localization signal) span residues 145–155 (RCRRTDGKKWR) and 173–180 (RGRGRSRK).

The protein belongs to the GRF family.

The protein localises to the nucleus. In terms of biological role, transcription activator that plays a regulatory role in gibberellin-induced stem elongation. In Oryza sativa subsp. japonica (Rice), this protein is Growth-regulating factor 12 (GRF12).